The sequence spans 238 residues: Sugar fermentation stimulation protein homolog (238 aa).

It belongs to the SfsA family.

The polypeptide is Sugar fermentation stimulation protein homolog (Klebsiella pneumoniae subsp. pneumoniae (strain ATCC 700721 / MGH 78578)).